We begin with the raw amino-acid sequence, 636 residues long: MGPIDTSQRLARLRELMQERKVDVYVVPSEDSHQSEYIAHCDGRREFISGFTGSAGCAIVSMTKAALSTDGRYFNQAAKQLDNNWILLKRGFENMPTWQEWTAEQAEGGKVVGVDPSLITASDARNLSETIKKCGGSLLGVQENLVDLVWGAERPARPSEKVALHPIEFAGKSFEEKISDLRKELQKKKCAGFVISMLDEIAWLFNLRGNDIPYNPVFFAYAIITQSTADLYIDEEKLPAEVKNYLGDKVSLKPYSSIFEDAKVLGQSAQNKSDGETSTKPPQKFLISTRASWSLSLALGGEKNVEEVRSPITDAKAIKNEAELEGMRACHIRDGAALSEYFAWLENELVNKKTVLNEVDASDKLEQIRSKHQHFVGLSFDTISSTGPNAAVIHYKAERNNCSIIDPKAVYLCDSGAQYLDGTTDTTRTLHFGEPTEMEKKAYTLVLKGLISIDTAVFPKGTTGFALDAFARQYLWKEGLDYLHGTGHGVGSYLNVHEGPIGLGTRVQYSEVAIAPGNVISDEPGYYEDGVFGIRIESPFFPHLLINLPFLLTPIIDIIMAKEVKTTHKFGEKPWLGFEHVTMTPLCQKLINPSLLSDVEKKWVNDYHTEIWEKTSKYFENDELTRNWLKRETQPI.

Residues Asp414, Asp425, Glu523, and Glu537 each contribute to the Mn(2+) site.

The protein belongs to the peptidase M24B family. Requires Mn(2+) as cofactor.

The enzyme catalyses Release of any N-terminal amino acid, including proline, that is linked to proline, even from a dipeptide or tripeptide.. In terms of biological role, catalyzes the removal of a penultimate prolyl residue from the N-termini of peptides. In Ajellomyces capsulatus (strain H143) (Darling's disease fungus), this protein is Probable Xaa-Pro aminopeptidase P (AMPP).